Reading from the N-terminus, the 313-residue chain is Ribosomal protein L11 methyltransferase (313 aa).

Positions 164, 185, 207, and 249 each coordinate S-adenosyl-L-methionine.

This sequence belongs to the methyltransferase superfamily. PrmA family.

Its subcellular location is the cytoplasm. The enzyme catalyses L-lysyl-[protein] + 3 S-adenosyl-L-methionine = N(6),N(6),N(6)-trimethyl-L-lysyl-[protein] + 3 S-adenosyl-L-homocysteine + 3 H(+). Functionally, methylates ribosomal protein L11. This chain is Ribosomal protein L11 methyltransferase, found in Clostridium botulinum (strain Eklund 17B / Type B).